A 244-amino-acid chain; its full sequence is 1-(5-phosphoribosyl)-5-[(5-phosphoribosylamino)methylideneamino] imidazole-4-carboxamide isomerase (244 aa).

Asp9 functions as the Proton acceptor in the catalytic mechanism. The active-site Proton donor is the Asp131.

This sequence belongs to the HisA/HisF family.

Its subcellular location is the cytoplasm. It carries out the reaction 1-(5-phospho-beta-D-ribosyl)-5-[(5-phospho-beta-D-ribosylamino)methylideneamino]imidazole-4-carboxamide = 5-[(5-phospho-1-deoxy-D-ribulos-1-ylimino)methylamino]-1-(5-phospho-beta-D-ribosyl)imidazole-4-carboxamide. Its pathway is amino-acid biosynthesis; L-histidine biosynthesis; L-histidine from 5-phospho-alpha-D-ribose 1-diphosphate: step 4/9. The chain is 1-(5-phosphoribosyl)-5-[(5-phosphoribosylamino)methylideneamino] imidazole-4-carboxamide isomerase from Campylobacter jejuni subsp. doylei (strain ATCC BAA-1458 / RM4099 / 269.97).